We begin with the raw amino-acid sequence, 344 residues long: Fe-S cluster assembly protein DRE2 (344 aa).

Positions 1 to 160 (MTSNILLLLH…KKLNNDNAST (160 aa)) are N-terminal SAM-like domain. The tract at residues 154–179 (NNDNASTPGLTDSSAGTSEDETATVS) is disordered. The segment covering 155-170 (NDNASTPGLTDSSAGT) has biased composition (polar residues). The segment at 161–223 (PGLTDSSAGT…NDLIAESNKY (63 aa)) is linker. The [2Fe-2S] cluster site is built by C231, C243, C246, and C248. Residues 231–248 (CELPNGKKRKKACKDCTC) form a fe-S binding site A region. [4Fe-4S] cluster contacts are provided by C313, C316, C324, and C327. 2 short sequence motifs (cx2C motif) span residues 313-316 (CGSC) and 324-327 (CDGC). The segment at 313 to 327 (CGSCSLGDAFRCDGC) is fe-S binding site B.

Belongs to the anamorsin family. In terms of assembly, monomer. Interacts with TAH18. Interacts with MIA40. It depends on [2Fe-2S] cluster as a cofactor. Requires [4Fe-4S] cluster as cofactor.

It is found in the cytoplasm. It localises to the mitochondrion intermembrane space. Its function is as follows. Component of the cytosolic iron-sulfur (Fe-S) protein assembly (CIA) machinery required for the maturation of extramitochondrial Fe-S proteins. Part of an electron transfer chain functioning in an early step of cytosolic Fe-S biogenesis, facilitating the de novo assembly of a [4Fe-4S] cluster on the scaffold complex CFD1-NBP35. Electrons are transferred to DRE2 from NADPH via the FAD- and FMN-containing protein TAH18. TAH18-DRE2 are also required for the assembly of the diferric tyrosyl radical cofactor of ribonucleotide reductase (RNR), probably by providing electrons for reduction during radical cofactor maturation in the catalytic small subunit RNR2. This chain is Fe-S cluster assembly protein DRE2, found in Candida tropicalis (strain ATCC MYA-3404 / T1) (Yeast).